The chain runs to 637 residues: Chaperone protein HtpG (637 aa).

Positions 1–345 (MSQQETHGFQ…SNDLPLNVSR (345 aa)) are a; substrate-binding. The segment at 346-562 (EILQDNHVTK…DGEMSTQMIK (217 aa)) is b. Positions 563–637 (LMQAAGQPVP…MNQMLLANMK (75 aa)) are c.

It belongs to the heat shock protein 90 family. As to quaternary structure, homodimer.

The protein resides in the cytoplasm. Its function is as follows. Molecular chaperone. Has ATPase activity. In Shewanella baltica (strain OS155 / ATCC BAA-1091), this protein is Chaperone protein HtpG.